Reading from the N-terminus, the 320-residue chain is 3'-5' exoribonuclease YhaM (320 aa).

A DNA-binding region (OB) is located at residues 18 to 90 (FLIKSATKAV…QLKIGSIRPT (73 aa)). Residues 163–279 (HVVCMLNVAK…LHMIDNIDAK (117 aa)) enclose the HD domain.

It belongs to the YhaM family.

Functionally, shows a 3'-5' exoribonuclease activity. The protein is 3'-5' exoribonuclease YhaM of Halalkalibacterium halodurans (strain ATCC BAA-125 / DSM 18197 / FERM 7344 / JCM 9153 / C-125) (Bacillus halodurans).